We begin with the raw amino-acid sequence, 449 residues long: Biotin carboxylase (449 aa).

In terms of domain architecture, Biotin carboxylation spans 4–448 (MIEKVLIANR…NIHYLEKMLG (445 aa)). ATP contacts are provided by residues lysine 119, lysine 162, 168–169 (GG), 204–207 (EKYL), histidine 212, and histidine 239. The ATP-grasp domain maps to 123-320 (IAAMKAAGVP…IVKEQILIAA (198 aa)). Lysine 241 lines the hydrogencarbonate pocket. Residues glutamate 279 and glutamate 291 each contribute to the ATP site. Residues glutamate 279, glutamate 291, and asparagine 293 each contribute to the Mg(2+) site. 3 residues coordinate Mn(2+): glutamate 279, glutamate 291, and asparagine 293. Residues arginine 295, valine 298, and arginine 341 each contribute to the hydrogencarbonate site. Arginine 295 is an active-site residue. Arginine 341 provides a ligand contact to biotin.

Acetyl-CoA carboxylase is a heterohexamer of biotin carboxyl carrier protein, biotin carboxylase and the two subunits of carboxyl transferase in a 2:2 complex. Requires Mg(2+) as cofactor. The cofactor is Mn(2+).

It carries out the reaction N(6)-biotinyl-L-lysyl-[protein] + hydrogencarbonate + ATP = N(6)-carboxybiotinyl-L-lysyl-[protein] + ADP + phosphate + H(+). The protein operates within lipid metabolism; malonyl-CoA biosynthesis; malonyl-CoA from acetyl-CoA: step 1/1. This protein is a component of the acetyl coenzyme A carboxylase complex; first, biotin carboxylase catalyzes the carboxylation of the carrier protein and then the transcarboxylase transfers the carboxyl group to form malonyl-CoA. This is Biotin carboxylase (accC) from Allochromatium vinosum (strain ATCC 17899 / DSM 180 / NBRC 103801 / NCIMB 10441 / D) (Chromatium vinosum).